Here is a 202-residue protein sequence, read N- to C-terminus: Methylthioribulose-1-phosphate dehydratase (202 aa).

Residues His-93 and His-95 each coordinate Zn(2+).

Belongs to the aldolase class II family. MtnB subfamily. Zn(2+) is required as a cofactor.

It carries out the reaction 5-(methylsulfanyl)-D-ribulose 1-phosphate = 5-methylsulfanyl-2,3-dioxopentyl phosphate + H2O. Its pathway is amino-acid biosynthesis; L-methionine biosynthesis via salvage pathway; L-methionine from S-methyl-5-thio-alpha-D-ribose 1-phosphate: step 2/6. Its function is as follows. Catalyzes the dehydration of methylthioribulose-1-phosphate (MTRu-1-P) into 2,3-diketo-5-methylthiopentyl-1-phosphate (DK-MTP-1-P). The chain is Methylthioribulose-1-phosphate dehydratase from Klebsiella pneumoniae subsp. pneumoniae (strain ATCC 700721 / MGH 78578).